The chain runs to 323 residues: Oligopeptide transport ATP-binding protein OppD (323 aa).

An ABC transporter domain is found at 5–254 (LDVKNLYVRF…PTHPYSIGLM (250 aa)). 41 to 48 (GESGSGKS) is an ATP binding site.

Belongs to the ABC transporter superfamily. The complex is composed of two ATP-binding proteins (OppD and OppF), two transmembrane proteins (OppB and OppC) and a solute-binding protein (OppA or MppA).

The protein resides in the cell inner membrane. The catalysed reaction is a [peptide](out) + ATP + H2O = a [peptide](in) + ADP + phosphate + H(+). Part of the ABC transporter complex OppABCDF involved in the uptake of oligopeptides. Probably responsible for energy coupling to the transport system. This chain is Oligopeptide transport ATP-binding protein OppD (oppD), found in Haemophilus influenzae (strain ATCC 51907 / DSM 11121 / KW20 / Rd).